The following is a 609-amino-acid chain: mRNA cap guanine-N(7) methyltransferase (609 aa).

Residues 1–10 (MASKEEERTG) are compositionally biased toward basic and acidic residues. The disordered stretch occupies residues 1–252 (MASKEEERTG…EEDAMRNSQS (252 aa)). Composition is skewed to low complexity over residues 28 to 47 (QPVV…ATPT) and 70 to 87 (PQTT…QQKQ). Over residues 148 to 163 (ANDRPISKRKRLEERH) the composition is skewed to basic and acidic residues. Residues 193–205 (PRSPSPPLPPRSP) are compositionally biased toward pro residues. A compositionally biased stretch (basic and acidic residues) spans 233-247 (RRQEERERALEEDAM). Positions 278-590 (SKIKGLRSFN…KYTPLGFTSA (313 aa)) constitute an mRNA cap 0 methyltransferase domain. Residue 287–288 (NN) coordinates mRNA. Residues lysine 291, glycine 314, aspartate 338, aspartate 379, 422 to 424 (MFA), and tyrosine 427 contribute to the S-adenosyl-L-methionine site.

Belongs to the class I-like SAM-binding methyltransferase superfamily. mRNA cap 0 methyltransferase family.

Its subcellular location is the nucleus. The catalysed reaction is a 5'-end (5'-triphosphoguanosine)-ribonucleoside in mRNA + S-adenosyl-L-methionine = a 5'-end (N(7)-methyl 5'-triphosphoguanosine)-ribonucleoside in mRNA + S-adenosyl-L-homocysteine. Its function is as follows. Responsible for methylating the 5'-cap structure of mRNAs. In Aspergillus niger (strain ATCC MYA-4892 / CBS 513.88 / FGSC A1513), this protein is mRNA cap guanine-N(7) methyltransferase (abd1).